Here is a 232-residue protein sequence, read N- to C-terminus: Pseudaminic acid cytidylyltransferase (232 aa).

This sequence belongs to the CMP-NeuNAc synthase family. The cofactor is Mg(2+).

The catalysed reaction is pseudaminate + CTP = CMP-pseudaminate + diphosphate. Functionally, catalyzes the final step in the biosynthesis of pseudaminic acid, a sialic-acid-like sugar that is used to modify flagellin. Mediates the activation of pseudaminic acid with CMP by forming CMP-pseudaminic acid. This Campylobacter jejuni subsp. jejuni serotype O:23/36 (strain 81-176) protein is Pseudaminic acid cytidylyltransferase (pseF).